The following is a 151-amino-acid chain: Deoxyuridine 5'-triphosphate nucleotidohydrolase (151 aa).

Substrate-binding positions include 70-72, Asn83, 87-89, and Met97; these read RSG and LID.

The protein belongs to the dUTPase family. Mg(2+) serves as cofactor.

It carries out the reaction dUTP + H2O = dUMP + diphosphate + H(+). Its pathway is pyrimidine metabolism; dUMP biosynthesis; dUMP from dCTP (dUTP route): step 2/2. This enzyme is involved in nucleotide metabolism: it produces dUMP, the immediate precursor of thymidine nucleotides and it decreases the intracellular concentration of dUTP so that uracil cannot be incorporated into DNA. The polypeptide is Deoxyuridine 5'-triphosphate nucleotidohydrolase (Tolumonas auensis (strain DSM 9187 / NBRC 110442 / TA 4)).